A 154-amino-acid chain; its full sequence is UPF0756 membrane protein BPUM_2558 (154 aa).

Helical transmembrane passes span 8-28 (FLVLLLVIALIAKNNSLILAV), 54-74 (WGVTVITIAVLVPIATGDIGF), 87-107 (WIALGAGILVALIAKNGIVLL), and 117-137 (LVFGTILAVSLFKGVAVGPLI).

It belongs to the UPF0756 family.

It localises to the cell membrane. The sequence is that of UPF0756 membrane protein BPUM_2558 from Bacillus pumilus (strain SAFR-032).